A 264-amino-acid polypeptide reads, in one-letter code: tRNA pseudouridine synthase A (264 aa).

Residue aspartate 51 is the Nucleophile of the active site. Tyrosine 109 is a binding site for substrate.

It belongs to the tRNA pseudouridine synthase TruA family. As to quaternary structure, homodimer.

The enzyme catalyses uridine(38/39/40) in tRNA = pseudouridine(38/39/40) in tRNA. Its function is as follows. Formation of pseudouridine at positions 38, 39 and 40 in the anticodon stem and loop of transfer RNAs. This is tRNA pseudouridine synthase A from Vibrio parahaemolyticus serotype O3:K6 (strain RIMD 2210633).